A 612-amino-acid polypeptide reads, in one-letter code: UvrABC system protein C (612 aa).

One can recognise a GIY-YIG domain in the interval 21–99 (KLPGVYQMYD…IKSQKPPFNI (79 aa)). One can recognise a UVR domain in the interval 209-244 (EVLQQELQVEMEQASQALDFERAVVVRDQITDLRQV).

Belongs to the UvrC family. In terms of assembly, interacts with UvrB in an incision complex.

Its subcellular location is the cytoplasm. Its function is as follows. The UvrABC repair system catalyzes the recognition and processing of DNA lesions. UvrC both incises the 5' and 3' sides of the lesion. The N-terminal half is responsible for the 3' incision and the C-terminal half is responsible for the 5' incision. The sequence is that of UvrABC system protein C from Saccharophagus degradans (strain 2-40 / ATCC 43961 / DSM 17024).